The following is a 575-amino-acid chain: Acyloxyacyl hydrolase (575 aa).

An N-terminal signal peptide occupies residues 1-25 (MKSPWRILVVSPLLLLPLHSSTSRA). A propeptide spanning residues 26–34 (HDNQPGTIR) is cleaved from the precursor. The Saposin B-type domain occupies 36 to 117 (DHYTCVGCVL…HTLEFCKQEP (82 aa)). The segment at 37 to 69 (HYTCVGCVLVVSVIEQLAQVHNSTVQASMERLC) is important for enzyme activity, localization to cytoplasmic vesicles, and protein stability. Intrachain disulfides connect C40–C113, C43–C107, C69–C82, C122–C453, C159–C168, C205–C229, C248–C328, and C375–C459. N58 carries N-linked (GlcNAc...) asparagine glycosylation. Residues 172 to 176 (KLAIK) form a lipopolysaccharide binding region. Ca(2+) contacts are provided by D183, D185, D187, Y189, D204, N206, D207, D209, V212, D222, D226, N228, N230, I232, and E244. N-linked (GlcNAc...) asparagine glycosylation occurs at N206. S262 is a catalytic residue. N466 carries an N-linked (GlcNAc...) asparagine glycan.

Heterodimer of the large and small subunits; disulfide-linked. The cofactor is Ca(2+). In terms of processing, cleaved into a large and a small subunit. The small subunit is N-glycosylated.

Its subcellular location is the secreted. It is found in the cytoplasmic vesicle. It catalyses the reaction a 3-(acyloxy)acyl derivative of bacterial toxin + H2O = a 3-hydroxyacyl derivative of bacterial toxin + a fatty acid + H(+). Functionally, removes the secondary (acyloxyacyl-linked) fatty acyl chains from the lipid A region of bacterial lipopolysaccharides (LPS). By breaking down LPS, terminates the host response to bacterial infection and prevents prolonged and damaging inflammatory responses. In peritoneal macrophages, seems to be important for recovery from a state of immune tolerance following infection by Gram-negative bacteria. This Oryctolagus cuniculus (Rabbit) protein is Acyloxyacyl hydrolase.